The sequence spans 393 residues: Zinc finger CCHC domain-containing protein 18 (393 aa).

Disordered stretches follow at residues 281 to 300 and 313 to 341; these read VEPEDPPLSSPGASSLRGTA and DDFDEESPSTSSGSGQRNNGPGDLGRTRK. Polar residues-rich tracts occupy residues 291–300 and 320–331; these read PGASSLRGTA and PSTSSGSGQRNN. Residues 346–363 form a CCHC-type zinc finger; it reads IRCPHCGEEGHAKETCDN.

Belongs to the ZCCHC12 family.

This chain is Zinc finger CCHC domain-containing protein 18, found in Mus musculus (Mouse).